Consider the following 392-residue polypeptide: Adenosine 3'-phospho 5'-phosphosulfate transporter 2 (392 aa).

The interval Asn11–Ser35 is disordered. 10 helical membrane passes run Cys62–Val82, Pro87–Glu107, Leu136–Leu156, Pro159–Ile179, Gly185–Ala205, Asn212–Gly232, Val249–Gly269, Phe286–Leu306, Ile314–Phe334, and Phe338–Tyr358.

It belongs to the nucleotide-sugar transporter family. SLC35B subfamily.

The protein resides in the golgi apparatus membrane. Mediates the transport of adenosine 3'-phospho 5'-phosphosulfate (PAPS), from cytosol into Golgi. PAPS is a universal sulfuryl donor for sulfation events that take place in the Golgi. Essential for viability. Involved in glycosaminoglycan synthesis and the subsequent signaling. May be involved in hh and dpp signaling by controlling the sulfation of heparan sulfate (HS). The protein is Adenosine 3'-phospho 5'-phosphosulfate transporter 2 of Drosophila pseudoobscura pseudoobscura (Fruit fly).